The sequence spans 157 residues: Probable succinate transporter subunit YjjB (157 aa).

Helical transmembrane passes span 8–28 (LALMQDMILSAIPAVGFAMVF), 55–75 (AGFNIEWSTFMASLLVGSIGI), 87–107 (VFTVAAVIPMFPGISAYTAMI), and 129–149 (FLKASSIVGALSIGLSVPGLW).

This sequence belongs to the ThrE exporter (TC 2.A.79) family. The transporter is composed of YjjB and YjjP.

The protein localises to the cell inner membrane. Functionally, involved in succinate export with YjjP. Both proteins are required for export. The sequence is that of Probable succinate transporter subunit YjjB from Salmonella agona (strain SL483).